A 333-amino-acid chain; its full sequence is Glycerol-3-phosphate dehydrogenase [NAD(P)+] (333 aa).

Positions 13, 33, and 108 each coordinate NADPH. Sn-glycerol 3-phosphate-binding residues include Lys-108 and Gly-138. Ser-142 contacts NADPH. Residues Lys-193, Asp-246, Ser-256, Arg-257, and Asn-258 each coordinate sn-glycerol 3-phosphate. The Proton acceptor role is filled by Lys-193. Residue Arg-257 participates in NADPH binding. Residues Val-281 and Glu-283 each contribute to the NADPH site.

Belongs to the NAD-dependent glycerol-3-phosphate dehydrogenase family.

Its subcellular location is the cytoplasm. It carries out the reaction sn-glycerol 3-phosphate + NAD(+) = dihydroxyacetone phosphate + NADH + H(+). The catalysed reaction is sn-glycerol 3-phosphate + NADP(+) = dihydroxyacetone phosphate + NADPH + H(+). It participates in membrane lipid metabolism; glycerophospholipid metabolism. Catalyzes the reduction of the glycolytic intermediate dihydroxyacetone phosphate (DHAP) to sn-glycerol 3-phosphate (G3P), the key precursor for phospholipid synthesis. The polypeptide is Glycerol-3-phosphate dehydrogenase [NAD(P)+] (Bifidobacterium longum (strain NCC 2705)).